The chain runs to 126 residues: MTRIVGVDLPKNKRIEISLTYIYGIGKSKAIEILEQLKINRNIKTKELKDEQIVLIRQILNNSYQIEGDLKRVESMNIKRLMTISSYRGKRHQLGLPLRGQNTRTNARTKRGIKKTMAGKKKAPRK.

Residues G95–K126 form a disordered region. Basic residues predominate over residues A107–K126.

It belongs to the universal ribosomal protein uS13 family. Part of the 30S ribosomal subunit.

Its subcellular location is the plastid. It localises to the chloroplast. Functionally, located at the top of the head of the 30S subunit, it contacts several helices of the 16S rRNA. This Gracilaria tenuistipitata var. liui (Red alga) protein is Small ribosomal subunit protein uS13c.